The sequence spans 700 residues: Protein kinase C, eye isozyme (700 aa).

2 Phorbol-ester/DAG-type zinc fingers span residues 71 to 121 and 136 to 186; these read GHRF…VFKC and KHGW…PPMC. Residues 189 to 310 form the C2 domain; that stretch reads DISEVRGKLL…LQKEPVDGWY (122 aa). Positions 222, 228, 281, 283, 286, and 289 each coordinate Ca(2+). In terms of domain architecture, Protein kinase spans 371–629; it reads FNFVKVIGKG…RQEITTHPFF (259 aa). Residues 377–385 and Lys-400 each bind ATP; that span reads IGKGSFGKV. Asp-495 serves as the catalytic Proton acceptor. The AGC-kinase C-terminal domain occupies 630–700; the sequence is RNVDWDKAEA…FMNPEFITII (71 aa).

This sequence belongs to the protein kinase superfamily. AGC Ser/Thr protein kinase family. PKC subfamily. The cofactor is Ca(2+). Exclusively expressed in photoreceptor cells.

It carries out the reaction L-seryl-[protein] + ATP = O-phospho-L-seryl-[protein] + ADP + H(+). It catalyses the reaction L-threonyl-[protein] + ATP = O-phospho-L-threonyl-[protein] + ADP + H(+). Functionally, this is a calcium-activated, phospholipid-dependent, serine- and threonine-specific enzyme. This isozyme is a negative regulator of the visual transduction cascade and has been shown to be required for photoreceptor cell inactivation and light adaptation. Negative regulation is dependent on interaction with scaffolding protein inaD. Acts in a hh-signaling pathway which regulates the Duox-dependent gut immune response to bacterial uracil; required for the activation of Cad99C and consequently Cad99C-dependent endosome formation, which is essential for the Duox-dependent production of reactive oxygen species (ROS) in response to intestinal bacterial infection. This chain is Protein kinase C, eye isozyme (inaC), found in Drosophila melanogaster (Fruit fly).